The primary structure comprises 87 residues: Acyl carrier protein TtuC (87 aa).

Positions 11–87 constitute a Carrier domain; it reads ITAEDVQQWL…HALSQFIAAK (77 aa). Ser-48 carries the post-translational modification O-(pantetheine 4'-phosphoryl)serine.

Pantetheine 4'-phosphate is required as a cofactor.

Functionally, carrier protein likely involved in the biosynthesis of a polyyne metabolite. Accepts as substrate the activated form of decanoic acid from TtuA. This is Acyl carrier protein TtuC from Teredinibacter turnerae (strain ATCC 39867 / T7901).